The chain runs to 325 residues: MRSTLRKDLIELFSQAGNEFISGQKISDALGCSRTAVWKHIEELRKEGYEVEAVRRKGYRLIKKPGKLSESEIRFGLKTEVMGQHLIYHDVLSSTQKTAHELANNNAPEGTLVVADKQTAGRGRMSRVWHSQEGNGVWMSLILRPDIPLQKTPQLTLLAAVAVVQGIEEAAGIQTDIKWPNDILINGKKTVGILTEMQAEEDRVRSVIIGIGINVNQQPNDFPDELKDIATSLSQAAGEKIDRAGVIQHILLCFEKRYRDYMTHGFTPIKLLWESYALGIGTNMRARTLNGTFYGKALGIDDEGVLLLETNEGIKKIYSADIELG.

Positions Gly23–Glu42 form a DNA-binding region, H-T-H motif. Residues Arg74–Met262 form the BPL/LPL catalytic domain. Biotin contacts are provided by residues Gln118, Arg122–Arg124, and Lys189.

It belongs to the biotin--protein ligase family.

It carries out the reaction biotin + L-lysyl-[protein] + ATP = N(6)-biotinyl-L-lysyl-[protein] + AMP + diphosphate + H(+). Its function is as follows. Acts both as a biotin--[acetyl-CoA-carboxylase] ligase and a repressor. This Bacillus subtilis (strain 168) protein is Bifunctional ligase/repressor BirA.